The sequence spans 399 residues: MTFGKAAFLSFSLFGASWAGPSRTLQARAVCTPKAGGSSSIDDVPAIVKSISACGDGGTIVFPEDSTYYLNSVLDLAGCSGCELQVEGLLKFASDTDYWNGRTAMINVKNIDGLTIRSLTGSGVIDGNGQNAYDRFAEDSSYDRPTPLYITGGGDIKVSNFRLKNAPNVFVSVKGGTTNAVFSDMRLDATSKSENLPKNTDGFDIGESTYVTISGTTVSNNDDCVAFKPGCNYLTVTDITCTGSHGLSVGSLGKSSDDIVQNVRVEGATMISSTKAAGIKTYPSGGDHGLSTVTNVTWKDITIQNCDYAIQIQSCYGEDEEYCETNPGDAVFSGIAFEGFSGTTSSKYDPVTGNLNCGEDGKCDVSVVDYSVKAPSGGAAENLTVTTYKNRCLCQARSV.

A signal peptide spans 1–19 (MTFGKAAFLSFSLFGASWA). 5 PbH1 repeats span residues 177 to 207 (TTNA…DIGE), 208 to 229 (STYV…AFKP), 231 to 251 (CNYL…SVGS), 260 to 283 (VQNV…KTYP), and 293 to 314 (VTNV…QIQS). D222 acts as the Proton donor in catalysis. H245 is a catalytic residue. Residues N295 and N382 are each glycosylated (N-linked (GlcNAc...) asparagine).

This sequence belongs to the glycosyl hydrolase 28 family.

The protein localises to the secreted. Functionally, pectinolytic enzyme involved in the degradation of xylogalacturonan (xga), a galacturonan backbone heavily substituted with xylose, and which is one important component of the hairy regions of pectin. Activity requires a galacturonic acid backbone substituted with xylose. In Emericella nidulans (strain FGSC A4 / ATCC 38163 / CBS 112.46 / NRRL 194 / M139) (Aspergillus nidulans), this protein is Probable endo-xylogalacturonan hydrolase A (xghA).